Here is a 361-residue protein sequence, read N- to C-terminus: Basic helix-loop-helix protein 79 (361 aa).

The disordered stretch occupies residues 66–159 (APEASNGSGS…ASTVTAGQKT (94 aa)). Basic and acidic residues predominate over residues 124-138 (GRPERARPGAKKKAE). Residues 146–157 (PATSASTVTAGQ) are compositionally biased toward polar residues. The Nuclear localization signal motif lies at 166–173 (ARRGQATD). The tract at residues 170–183 (QATDSHSLAERVRR) is basic motif; degenerate. Residues 170–220 (QATDSHSLAERVRRERISERMRYLQELVPGCNKVTGKAGMLDEIINYVQSL) form the bHLH domain. The helix-loop-helix motif stretch occupies residues 184-220 (ERISERMRYLQELVPGCNKVTGKAGMLDEIINYVQSL).

It belongs to the bHLH protein family. Homodimer. Interacts with IBH1.

The protein resides in the nucleus. In terms of biological role, together with BCL1, positive regulator of cell elongation at least partially through increased gibberellic acid (GA) biosynthesis. In Oryza sativa subsp. indica (Rice), this protein is Basic helix-loop-helix protein 79.